Here is a 640-residue protein sequence, read N- to C-terminus: Ribonuclease J (640 aa).

Histidine 75, histidine 77, aspartate 79, histidine 80, histidine 145, and aspartate 167 together coordinate Zn(2+). Residue 368-372 coordinates substrate; that stretch reads HVSGH. Histidine 394 serves as a coordination point for Zn(2+). Positions 578–640 are disordered; it reads TVSATSATPA…RKRSTTSVSS (63 aa). The span at 598–610 shows a compositional bias: basic and acidic residues; the sequence is PEPKVKAKPEKKV.

Belongs to the metallo-beta-lactamase superfamily. RNA-metabolizing metallo-beta-lactamase-like family. Bacterial RNase J subfamily. As to quaternary structure, homodimer, may be a subunit of the RNA degradosome. The cofactor is Zn(2+).

It is found in the cytoplasm. An RNase that has 5'-3' exonuclease and possibly endoonuclease activity. Involved in maturation of rRNA and in some organisms also mRNA maturation and/or decay. This is Ribonuclease J from Synechocystis sp. (strain ATCC 27184 / PCC 6803 / Kazusa).